Consider the following 323-residue polypeptide: Zinc finger C2HC domain-containing protein 1A (323 aa).

Residues 14–43 (ELLPCKICGRTFFPVALKKHGPICQKTATK) form a C2HC/C3H-type 1 zinc finger. Zn(2+)-binding residues include Cys18, Cys21, His33, and Cys37. Residues 42–81 (TKKRKTFDSSRQRAEGTDIPTVKPLKPRPEPPKKPSNWRR) are disordered. Over residues 47-57 (TFDSSRQRAEG) the composition is skewed to basic and acidic residues. The C2HC/C3H-type 2 zinc-finger motif lies at 117-146 (DYIQCPYCQRRFNENAADRHINFCKEQAAR). The Zn(2+) site is built by Cys121, Cys124, His136, and Cys140. The interval 149–258 (NKGKFSTDTK…NPASGVLTSK (110 aa)) is disordered. Polar residues predominate over residues 177 to 197 (SPGTTSSGSSRLPQPSGTSKT). A compositionally biased stretch (low complexity) spans 198-214 (VVGAPSGKVSSVSSSSG). Ser221 bears the Phosphoserine mark. Thr242 carries the phosphothreonine modification. At Ser290 the chain carries Phosphoserine.

It belongs to the ZC2HC1 family. Zn(2+) serves as cofactor.

The polypeptide is Zinc finger C2HC domain-containing protein 1A (ZC2HC1A) (Bos taurus (Bovine)).